The following is a 139-amino-acid chain: Probable disulfide formation protein C (139 aa).

The chain crosses the membrane as a helical span at residues 8 to 27; that stretch reads EYALLTAWGASFIATLGSLY. Cysteine 37 and cysteine 40 are joined by a disulfide. 2 helical membrane-spanning segments follow: residues 42 to 61 and 68 to 85; these read YQRIFMYPFVLWLGIAVAKK and YSLPIASIGACISLYHYA. An intrachain disulfide couples cysteine 99 to cysteine 104. The helical transmembrane segment at 113-135 threads the bilayer; that stretch reads GFVTIPFLALIGFITIAVCSFIV.

This sequence belongs to the DsbB family. BdbC subfamily.

The protein localises to the cell membrane. Required for disulfide bond formation in some proteins. The sequence is that of Probable disulfide formation protein C from Bacillus cereus (strain ATCC 14579 / DSM 31 / CCUG 7414 / JCM 2152 / NBRC 15305 / NCIMB 9373 / NCTC 2599 / NRRL B-3711).